Consider the following 360-residue polypeptide: Ferredoxin--NADP reductase (360 aa).

Residues Thr-25, Glu-44, Gln-52, Tyr-57, Val-97, Phe-132, Asp-298, and Ser-339 each contribute to the FAD site.

Belongs to the ferredoxin--NADP reductase type 2 family. In terms of assembly, homodimer. FAD is required as a cofactor.

The catalysed reaction is 2 reduced [2Fe-2S]-[ferredoxin] + NADP(+) + H(+) = 2 oxidized [2Fe-2S]-[ferredoxin] + NADPH. The sequence is that of Ferredoxin--NADP reductase from Chlorobaculum tepidum (strain ATCC 49652 / DSM 12025 / NBRC 103806 / TLS) (Chlorobium tepidum).